The primary structure comprises 457 residues: Transcription factor PCF7 (457 aa).

Positions 58–84 form a coiled coil; the sequence is STLHYLLQEKERAQQAHEQLQIYQQQQ. Positions 95–119 are disordered; sequence RQPASRGPGGGGGGGDGGGSSGEST. The span at 101–115 shows a compositional bias: gly residues; sequence GPGGGGGGGDGGGSS. Residues 140-198 form the TCP domain; the sequence is RKDRHSKVCTARGLRDRRVRLAAHTAIRFYDVQDRLGYDRPSKAVDWLMRNAKAAIDEL. Disordered regions lie at residues 199 to 231 and 263 to 299; these read PDRA…GFGN and KSLF…SNQQ. Composition is skewed to low complexity over residues 210–225 and 268–278; these read AAST…ATST and SSSTASGAASA.

Forms homodimers and heterodimers.

The protein localises to the nucleus. In terms of biological role, transcription activator. Binds the promoter core sequence 5'-GGNCC-3'. The chain is Transcription factor PCF7 (PCF7) from Oryza sativa subsp. japonica (Rice).